A 359-amino-acid chain; its full sequence is Phospho-N-acetylmuramoyl-pentapeptide-transferase (359 aa).

Helical transmembrane passes span 3 to 23 (QILI…PVLI), 55 to 75 (VAII…GVLM), 84 to 104 (GLLV…DDLI), 117 to 137 (TAKT…ALQF), 156 to 176 (IATV…VVSA), 190 to 210 (LAAG…FWQF), 231 to 251 (LAII…WNAA), 255 to 275 (IFMG…LSVT), 283 to 303 (VVLG…ILAF), and 330 to 350 (VIIR…ALFY).

Belongs to the glycosyltransferase 4 family. MraY subfamily. The cofactor is Mg(2+).

The protein resides in the cell membrane. It catalyses the reaction UDP-N-acetyl-alpha-D-muramoyl-L-alanyl-gamma-D-glutamyl-meso-2,6-diaminopimeloyl-D-alanyl-D-alanine + di-trans,octa-cis-undecaprenyl phosphate = di-trans,octa-cis-undecaprenyl diphospho-N-acetyl-alpha-D-muramoyl-L-alanyl-D-glutamyl-meso-2,6-diaminopimeloyl-D-alanyl-D-alanine + UMP. It participates in cell wall biogenesis; peptidoglycan biosynthesis. Functionally, catalyzes the initial step of the lipid cycle reactions in the biosynthesis of the cell wall peptidoglycan: transfers peptidoglycan precursor phospho-MurNAc-pentapeptide from UDP-MurNAc-pentapeptide onto the lipid carrier undecaprenyl phosphate, yielding undecaprenyl-pyrophosphoryl-MurNAc-pentapeptide, known as lipid I. The protein is Phospho-N-acetylmuramoyl-pentapeptide-transferase of Mycolicibacterium gilvum (strain PYR-GCK) (Mycobacterium gilvum (strain PYR-GCK)).